The chain runs to 426 residues: Trigger factor 1 (426 aa).

The PPIase FKBP-type domain maps to 163 to 248 (QDTVNIDFAG…VNKLKRKEYA (86 aa)).

Belongs to the FKBP-type PPIase family. Tig subfamily.

It localises to the cytoplasm. The enzyme catalyses [protein]-peptidylproline (omega=180) = [protein]-peptidylproline (omega=0). In terms of biological role, involved in protein export. Acts as a chaperone by maintaining the newly synthesized protein in an open conformation. Functions as a peptidyl-prolyl cis-trans isomerase. The protein is Trigger factor 1 of Desulfitobacterium hafniense (strain Y51).